Here is a 467-residue protein sequence, read N- to C-terminus: UDP-N-acetylmuramoylalanine--D-glutamate ligase (467 aa).

Residue 121–127 (GTNGKST) coordinates ATP.

The protein belongs to the MurCDEF family.

It localises to the cytoplasm. The enzyme catalyses UDP-N-acetyl-alpha-D-muramoyl-L-alanine + D-glutamate + ATP = UDP-N-acetyl-alpha-D-muramoyl-L-alanyl-D-glutamate + ADP + phosphate + H(+). It participates in cell wall biogenesis; peptidoglycan biosynthesis. Functionally, cell wall formation. Catalyzes the addition of glutamate to the nucleotide precursor UDP-N-acetylmuramoyl-L-alanine (UMA). The chain is UDP-N-acetylmuramoylalanine--D-glutamate ligase from Chelativorans sp. (strain BNC1).